Here is a 94-residue protein sequence, read N- to C-terminus: Selenoprotein K (94 aa).

The helical transmembrane segment at 20–42 (VSFLTDFFWGIAEFVVFFFKTLL) threads the bilayer. The disordered stretch occupies residues 46-94 (VKKRRGYGSSSDSRYDDGRGPPGNPPRRMGRISHLRGPSPPPMAGGUGR). A non-standard amino acid (selenocysteine) is located at residue selenocysteine 92.

Belongs to the selenoprotein K family. In terms of assembly, interacts with DERL1, DERL2, DERL3 and SELENOS. The SELENOK-SELENOS complex interacts with VCP. Interacts with ZDHHC6. Cleaved by CAPN2/m-calpain in resting macrophages but not in activated macrophages. Macrophage activation up-regulates expression of the calpain inhibitor CAST/calpastatin, resulting in inhibition of CAPN2 activity. In terms of processing, truncated SELENOK proteins produced by failed UGA/Sec decoding are ubiquitinated by the CRL2(KLHDC2) complex, which recognizes the diglycine (Gly-Gly) at the C-terminus of truncated SELENOK proteins. As to expression, high expression in spleen and intestine (at protein level). Expressed in a range of immune cells including T and B-cells and also in myeloid cells including macrophages, neutrophils and dendritic cells (at protein level).

It localises to the endoplasmic reticulum membrane. The protein localises to the cell membrane. In terms of biological role, required for Ca(2+) flux in immune cells and plays a role in T-cell proliferation and in T-cell and neutrophil migration. Involved in endoplasmic reticulum-associated degradation (ERAD) of soluble glycosylated proteins. Required for palmitoylation and cell surface expression of CD36 and involved in macrophage uptake of low-density lipoprotein and in foam cell formation. Together with ZDHHC6, required for palmitoylation of ITPR1 in immune cells, leading to regulate ITPR1 stability and function. Plays a role in protection of cells from ER stress-induced apoptosis. Protects cells from oxidative stress when overexpressed in cardiomyocytes. The chain is Selenoprotein K from Mus musculus (Mouse).